The following is a 999-amino-acid chain: Signal peptide, CUB and EGF-like domain-containing protein 2 (999 aa).

An N-terminal signal peptide occupies residues 1-31 (MGVAGRNRPGAAWAVLLLLLLLPPLLLLAGA). The 41-residue stretch at 45–85 (DVDECAQGLDDCHADALCQNTPTSYKCSCKPGYQGEGRQCE) folds into the EGF-like 1; calcium-binding domain. 6 cysteine pairs are disulfide-bonded: cysteine 49-cysteine 62, cysteine 56-cysteine 71, cysteine 73-cysteine 84, cysteine 90-cysteine 102, cysteine 98-cysteine 111, and cysteine 113-cysteine 126. One can recognise an EGF-like 2; calcium-binding domain in the interval 86-127 (DIDECGNELNGGCVHDCLNIPGNYRCTCFDGFMLAHDGHNCL). An EGF-like 3; calcium-binding domain is found at 128–168 (DVDECLENNGGCQHTCVNVMGSYECCCKEGFFLSDNQHTCI). EGF-like domains follow at residues 177–213 (CMNK…QRDC), 217–252 (CNHG…GRSC), and 286–321 (CAVN…GKTC). An EGF-like 7; calcium-binding domain is found at 323 to 363 (DIDECQTRNGGCDHFCKNIVGSFDCGCKKGFKLLTDEKSCQ). In terms of domain architecture, EGF-like 8; calcium-binding spans 364 to 402 (DVDECSLDRTCDHSCINHPGTFACACNRGYTLYGFTHCG). 6 cysteine pairs are disulfide-bonded: cysteine 368–cysteine 378, cysteine 374–cysteine 387, cysteine 389–cysteine 401, cysteine 407–cysteine 418, cysteine 414–cysteine 427, and cysteine 429–cysteine 442. One can recognise an EGF-like 9; calcium-binding domain in the interval 403–443 (DTNECSINNGGCQQVCVNTVGSYECQCHPGYKLHWNKKDCV). An N-linked (GlcNAc...) asparagine glycan is attached at asparagine 659. An intrachain disulfide couples cysteine 809 to cysteine 835. Residues 809-921 (CGGELGDFTG…RGFQVPYVTY (113 aa)) form the CUB domain. Residues 847–856 (ILIVVPEIFL) are interaction with the cholesterol-anchor of SHH. A disulfide bridge connects residues cysteine 862 and cysteine 883.

Forms homooligomers. Forms heterooligomers with SCUBE1. Forms heterooligomers with SCUBE3. Interacts with SHH via the cholesterol anchor of the dually lipid-modified SHH (ShhNp). Interacts with PTCH1. Interacts with VEGFR2. In terms of processing, N-glycosylated. In terms of tissue distribution, expressed in a broad spectrum of adult tissues.

The protein localises to the secreted. It is found in the cell surface. Functionally, lipid-binding protein required for SHH long-range signaling by binding to the dually lipid-modified SHH (ShhNp) and by promoting ShhNp mobilization, solubilization and release from the cell membrane. Acts by enhancing the proteolytic processing (shedding) of the lipid-modified N- and C- terminal of ShhNp at the cell surface. Synergizes with DISP1 to increase SHH secretion. Probable cell surface coreceptor for VEGFR2 involved in VEGFR2-mediated angiogenesis. The polypeptide is Signal peptide, CUB and EGF-like domain-containing protein 2 (Homo sapiens (Human)).